The following is a 123-amino-acid chain: Large ribosomal subunit protein bL17 (123 aa).

The protein belongs to the bacterial ribosomal protein bL17 family. Part of the 50S ribosomal subunit. Contacts protein L32.

This Exiguobacterium sibiricum (strain DSM 17290 / CCUG 55495 / CIP 109462 / JCM 13490 / 255-15) protein is Large ribosomal subunit protein bL17.